The sequence spans 99 residues: Ferredoxin, vegetative (99 aa).

A 2Fe-2S ferredoxin-type domain is found at 4-96 (YQVRLINKKR…DCTIRTHQEP (93 aa)). [2Fe-2S] cluster-binding residues include Cys42, Cys47, Cys50, and Cys80.

This sequence belongs to the 2Fe2S plant-type ferredoxin family. Requires [2Fe-2S] cluster as cofactor.

In terms of biological role, ferredoxins are iron-sulfur proteins that transfer electrons in a wide variety of metabolic reactions. Donates electrons to the nitrogenase 2. This is Ferredoxin, vegetative (fdxH2) from Trichormus variabilis (strain ATCC 29413 / PCC 7937) (Anabaena variabilis).